A 650-amino-acid polypeptide reads, in one-letter code: Chaperone protein HtpG (650 aa).

Residues 1–344 (MSKHTHSFQA…SADLPLNVSR (344 aa)) are a; substrate-binding. Residues 345-582 (ELLQESRDVR…DGGMSTQLAR (238 aa)) are b. The interval 583-650 (LLKQAGQSAP…YVKRVNALLA (68 aa)) is c.

The protein belongs to the heat shock protein 90 family. Homodimer.

It localises to the cytoplasm. Its function is as follows. Molecular chaperone. Has ATPase activity. The polypeptide is Chaperone protein HtpG (Acidovorax sp. (strain JS42)).